A 443-amino-acid polypeptide reads, in one-letter code: Eukaryotic translation initiation factor 3 subunit M (443 aa).

Residues 205-375 (GLYQSTGNLA…SLIRIHSISS (171 aa)) form the PCI domain. Positions 413-443 (ETVAQQGLGQQRRGGKRREEKKEKEDKEEQE) are disordered. The span at 429 to 443 (RREEKKEKEDKEEQE) shows a compositional bias: basic and acidic residues.

It belongs to the eIF-3 subunit M family. In terms of assembly, component of the eukaryotic translation initiation factor 3 (eIF-3) complex.

The protein localises to the cytoplasm. Functionally, component of the eukaryotic translation initiation factor 3 (eIF-3) complex, which is involved in protein synthesis of a specialized repertoire of mRNAs and, together with other initiation factors, stimulates binding of mRNA and methionyl-tRNAi to the 40S ribosome. The eIF-3 complex specifically targets and initiates translation of a subset of mRNAs involved in cell proliferation. This is Eukaryotic translation initiation factor 3 subunit M from Cryptococcus neoformans var. neoformans serotype D (strain B-3501A) (Filobasidiella neoformans).